A 524-amino-acid chain; its full sequence is MPTVEELYRNYGILADATEQVGQHKDAYQVILDGVKGGTKEKRLAAQFIPKFFKHFPELADSAINAQLDLCEDEDVSIRRQAIKELPQFATGENLPRVADILTQLLQTDDSAEFNLVNNALLSIFKMDAKGTLGGLFSQILQGEDIVRERAIKFLSTKLKTLPDEVLTKEVEELILTESKKVLEDVTGEEFVLFMKILSGLKSLQTVSGRQQLVELVAEQADLEQTFNPSDPDCVDRLLQCTRQAVPLFSKNVHSTRFVTYFCEQVLPNLGTLTTPVEGLDIQLEVLKLLAEMSSFCGDMEKLETNLRKLFDKLLEYMPLPPEEAENGENAGNEEPKLQFSYVECLLYSFHQLGRKLPDFLTAKLNAEKLKDFKIRLQYFARGLQVYIRQLRLALQGKTGEALKTEENKIKVVALKITNNINVLIKDLFHIPPSYKSTVTLSWKPVQKVEIGQKRASEDTTSGSPPKKSSAGPKRDARQIYNPPSGKYSSNLGNFNYEQRGAFRGSRGGRGWGTRGNRSRGRLY.

The ARM-like and Heat-like helical repeats stretch occupies residues 2–360; it reads PTVEELYRNY…HQLGRKLPDF (359 aa). Residue Lys-251 is modified to N6-acetyllysine. The leucine-zipper stretch occupies residues 370 to 391; sequence LKDFKIRLQYFARGLQVYIRQL. A Phosphothreonine modification is found at Thr-399. The disordered stretch occupies residues 452–524; it reads GQKRASEDTT…RGNRSRGRLY (73 aa). Residues 454-475 carry the Nuclear localization signal motif; sequence KRASEDTTSGSPPKKSSAGPKR. 3 positions are modified to phosphoserine: Ser-462, Ser-464, and Ser-469. A compositionally biased stretch (low complexity) spans 462–472; the sequence is SGSPPKKSSAG. The span at 487–497 shows a compositional bias: polar residues; it reads KYSSNLGNFNY. Residue Arg-500 is modified to Omega-N-methylarginine.

Belongs to the API5 family. In terms of assembly, monomer. Interacts with FGF2 and ACIN1. Post-translationally, acetylation at Lys-251 impairs antiapoptotic function. In terms of tissue distribution, expressed in all tissues tested, including heart, brain, placenta, lung, liver, skeletal muscle, kidney and pancreas. Highest levels in heart, pancreas and placenta. Highly expressed in several cancers. Preferentially expressed in squamous cell carcinoma versus adenocarcinoma in non-small cell lung cancer.

It is found in the nucleus. It localises to the cytoplasm. Its function is as follows. Antiapoptotic factor that may have a role in protein assembly. Negatively regulates ACIN1. By binding to ACIN1, it suppresses ACIN1 cleavage from CASP3 and ACIN1-mediated DNA fragmentation. Also known to efficiently suppress E2F1-induced apoptosis. Its depletion enhances the cytotoxic action of the chemotherapeutic drugs. The sequence is that of Apoptosis inhibitor 5 from Homo sapiens (Human).